A 452-amino-acid polypeptide reads, in one-letter code: Mitochondrial import inner membrane translocase subunit TIM50 (452 aa).

Residues 1–23 (MSLSKLTQTCFSRHQAKTFIRLY) constitute a mitochondrion transit peptide. Over 24 to 167 (SSDFKSLLGP…RRKRMERNTR (144 aa)) the chain is Mitochondrial matrix. 2 disordered regions span residues 96–115 (IEAEKVLSSPPPAPAPTSSA) and 130–153 (ESAASKSSSSSGGSSDNSDPGNAE). Low complexity predominate over residues 131-144 (SAASKSSSSSGGSS). A helical membrane pass occupies residues 168–188 (IGAYVLFGGSIIGFISFCFYY). The Mitochondrial intermembrane segment spans residues 189 to 452 (GRAQRDEFGN…LFGSRRHVNA (264 aa)). An FCP1 homology domain is found at 243–387 (YLQPKYTIVI…VDLAELLKTI (145 aa)).

The protein belongs to the TIM50 family.

The protein localises to the mitochondrion inner membrane. Its function is as follows. Essential component of the TIM23 complex, a complex that mediates the translocation of transit peptide-containing proteins across the mitochondrial inner membrane. The protein is Mitochondrial import inner membrane translocase subunit TIM50 (scpl-4) of Caenorhabditis elegans.